Consider the following 92-residue polypeptide: Large ribosomal subunit protein eL43z (92 aa).

A C4-type zinc finger spans residues 39 to 60; sequence CEFCGKYSVKRKVVGIWGCKDC.

It belongs to the eukaryotic ribosomal protein eL43 family.

In Arabidopsis thaliana (Mouse-ear cress), this protein is Large ribosomal subunit protein eL43z (RPL37AB).